The primary structure comprises 395 residues: Ribosomal RNA large subunit methyltransferase G (395 aa).

The protein belongs to the methyltransferase superfamily. RlmG family.

The protein localises to the cytoplasm. It carries out the reaction guanosine(1835) in 23S rRNA + S-adenosyl-L-methionine = N(2)-methylguanosine(1835) in 23S rRNA + S-adenosyl-L-homocysteine + H(+). Functionally, specifically methylates the guanine in position 1835 (m2G1835) of 23S rRNA. This chain is Ribosomal RNA large subunit methyltransferase G, found in Yersinia pestis (strain Pestoides F).